The primary structure comprises 512 residues: mRNA export factor (512 aa).

The span at Met1 to Leu15 shows a compositional bias: low complexity. Residues Met1 to Asp243 are disordered. The Nuclear export signal signature appears at Ile5–Asp17. Ser16 and Ser18 each carry phosphoserine; by host. Acidic residues-rich tracts occupy residues Ser16 to Glu26 and Leu35 to Glu51. Residues Val104–Arg112 are interaction with host ALYREF. The short motif at Ala110–Arg138 is the Nuclear localization signal element. Ser114 bears the Phosphoserine; by host mark. Arg138 bears the Dimethylated arginine; by host mark. An RGG-box region spans residues Arg138–Gly152. Positions Gly139–Gly149 are enriched in basic residues. Position 148 is an omega-N-methylarginine; by host (Arg148). A Dimethylated arginine; by host modification is found at Arg150. Pro residues predominate over residues Ala214–Pro233. 4 residues coordinate Zn(2+): Cys400, His479, Cys483, and Cys488. The CHC2-type zinc-finger motif lies at Cys400–Cys488. The interval Tyr500–Phe512 is important for homodimerization.

It belongs to the HHV-1 ICP27 protein family. Homodimer. Interacts with host RBP1; this interaction facilitates the RNA polymerase recruitment to viral transcription sites. Interacts (via the RGG box) with host ALYREF/THOC4; this interaction recruits ALYREF to viral replication compartments and probably directs viral mRNA to the TAP/NFX1 pathway. Interacts with host ALYREF2. Interacts (via the RGG box) with host SRPK1; this interaction relocalizes SRPK1 to the nucleus and seems to alter its activity. Interacts with ICP4; this interaction modulates ICP4 DNA-binding activity. Interacts with host NXF1; this interaction allows efficient export of HHV-1 early and late transcripts. Post-translationally, methylated within the RGG box possibly by host PRMT1. When hypomethylated, ICP27 is exported to the cytoplasm earlier and more rapidly. In terms of processing, phosphorylated.

It localises to the host cytoplasm. Its subcellular location is the host nucleus. Multifunctional regulator of the expression of viral genes that contributes to the shutoff of host protein synthesis and mediates nuclear export of viral intronless mRNAs. Early in infection, this immediate early (EI) protein mediates the inhibition of cellular splicing. This results in the accumulation of unprocessed 3'end pre-mRNAs which can't be exported from the nucleus. Cellular protein synthesis is thereby shut off early after virus infection. Later in the infection, it helps recruit cellular RNA polymerase II to viral replication sites and promotes the nuclear export of viral intronless mRNAs by interacting with mRNAs and host NXF1/TAP. ICP27 binds to NUP62 which may provide facilitated viral mRNA export and may indirectly compete with some host cell transport receptors for binding and inhibit cellular nucleocytoplasmic transport pathways. Also stimulates translation of viral transcripts. Repression of host gene expression blocks the cell cycle at the G1 phase and prevents apoptosis. Seems to silence the 3' splice site of the promyelocytic leukemia (PML) intron 7a, thereby switching PML isoforms from PML-II to PML-V. This could be linked to the accelerated mRNA export induced by ICP27 which might not provide sufficient time for PML pre-mRNA to be spliced in the nucleus. This Homo sapiens (Human) protein is mRNA export factor.